The following is a 245-amino-acid chain: Probable phosphatase YcdX (245 aa).

Zn(2+) contacts are provided by His7, His9, His15, His40, Glu73, His101, His131, Asp192, and His194.

Belongs to the PHP family. Homotrimer. Zn(2+) serves as cofactor.

This Salmonella arizonae (strain ATCC BAA-731 / CDC346-86 / RSK2980) protein is Probable phosphatase YcdX.